The sequence spans 443 residues: C4-dicarboxylate transport protein (443 aa).

The next 7 membrane-spanning stretches (helical) occupy residues 7–26 (SLYV…GALF), 46–63 (MVIA…VAHM), 76–98 (ALIY…MNVL), 140–162 (LVSA…FGFA), 183–205 (VVFV…AMAF), 218–240 (LGYL…LGLI), and 350–372 (FITL…ALIL). Residues 415-443 (GEDLPTTEPDVASEERGEGREIDSSRPVT) are disordered. Over residues 427 to 443 (SEERGEGREIDSSRPVT) the composition is skewed to basic and acidic residues.

Belongs to the dicarboxylate/amino acid:cation symporter (DAACS) (TC 2.A.23) family.

It is found in the cell membrane. In terms of biological role, responsible for the transport of dicarboxylates such as succinate, fumarate, and malate across the membrane. This chain is C4-dicarboxylate transport protein (dctA), found in Deinococcus radiodurans (strain ATCC 13939 / DSM 20539 / JCM 16871 / CCUG 27074 / LMG 4051 / NBRC 15346 / NCIMB 9279 / VKM B-1422 / R1).